The chain runs to 162 residues: 2-C-methyl-D-erythritol 2,4-cyclodiphosphate synthase (162 aa).

2 residues coordinate a divalent metal cation: aspartate 12 and histidine 14. Residues 12–14 (DVH) and 38–39 (HS) each bind 4-CDP-2-C-methyl-D-erythritol 2-phosphate. Histidine 46 is a binding site for a divalent metal cation. Residues 60–62 (DIG), 136–139 (TTTE), phenylalanine 143, and arginine 146 contribute to the 4-CDP-2-C-methyl-D-erythritol 2-phosphate site.

The protein belongs to the IspF family. In terms of assembly, homotrimer. A divalent metal cation is required as a cofactor.

The enzyme catalyses 4-CDP-2-C-methyl-D-erythritol 2-phosphate = 2-C-methyl-D-erythritol 2,4-cyclic diphosphate + CMP. Its pathway is isoprenoid biosynthesis; isopentenyl diphosphate biosynthesis via DXP pathway; isopentenyl diphosphate from 1-deoxy-D-xylulose 5-phosphate: step 4/6. In terms of biological role, involved in the biosynthesis of isopentenyl diphosphate (IPP) and dimethylallyl diphosphate (DMAPP), two major building blocks of isoprenoid compounds. Catalyzes the conversion of 4-diphosphocytidyl-2-C-methyl-D-erythritol 2-phosphate (CDP-ME2P) to 2-C-methyl-D-erythritol 2,4-cyclodiphosphate (ME-CPP) with a corresponding release of cytidine 5-monophosphate (CMP). In Porphyromonas gingivalis (strain ATCC 33277 / DSM 20709 / CIP 103683 / JCM 12257 / NCTC 11834 / 2561), this protein is 2-C-methyl-D-erythritol 2,4-cyclodiphosphate synthase.